The chain runs to 269 residues: Tryptophan synthase alpha chain (269 aa).

Residues Glu45 and Asp56 each act as proton acceptor in the active site.

Belongs to the TrpA family. In terms of assembly, tetramer of two alpha and two beta chains.

It catalyses the reaction (1S,2R)-1-C-(indol-3-yl)glycerol 3-phosphate + L-serine = D-glyceraldehyde 3-phosphate + L-tryptophan + H2O. The protein operates within amino-acid biosynthesis; L-tryptophan biosynthesis; L-tryptophan from chorismate: step 5/5. Functionally, the alpha subunit is responsible for the aldol cleavage of indoleglycerol phosphate to indole and glyceraldehyde 3-phosphate. The chain is Tryptophan synthase alpha chain from Shouchella clausii (strain KSM-K16) (Alkalihalobacillus clausii).